The following is a 235-amino-acid chain: Orotidine 5'-phosphate decarboxylase (235 aa).

Substrate-binding positions include D10, K33, 60 to 69 (DLKMSDIPNT), T123, R185, Q194, G214, and R215. The Proton donor role is filled by K62.

This sequence belongs to the OMP decarboxylase family. Type 1 subfamily. As to quaternary structure, homodimer.

The enzyme catalyses orotidine 5'-phosphate + H(+) = UMP + CO2. Its pathway is pyrimidine metabolism; UMP biosynthesis via de novo pathway; UMP from orotate: step 2/2. Its function is as follows. Catalyzes the decarboxylation of orotidine 5'-monophosphate (OMP) to uridine 5'-monophosphate (UMP). In Lactobacillus gasseri (strain ATCC 33323 / DSM 20243 / BCRC 14619 / CIP 102991 / JCM 1131 / KCTC 3163 / NCIMB 11718 / NCTC 13722 / AM63), this protein is Orotidine 5'-phosphate decarboxylase.